The primary structure comprises 477 residues: Tyrosine--tRNA ligase, mitochondrial (477 aa).

The N-terminal 16 residues, 1 to 16, are a transit peptide targeting the mitochondrion; it reads MAAPILRSFSWGRWSG. Residue Y77 coordinates L-tyrosine. An ATP-binding site is contributed by D81. Positions 82 to 91 match the 'HIGH' region motif; the sequence is PTADSLHVGH. Residues D121, Y221, Q225, and D228 each contribute to the L-tyrosine site. 244-246 lines the ATP pocket; the sequence is GSD. Q247 contacts L-tyrosine. ATP contacts are provided by I274 and K284. Residues 281–285 carry the 'KMSKS' region motif; sequence KLGKS. 2 positions are modified to N6-acetyllysine: K355 and K367.

The protein belongs to the class-I aminoacyl-tRNA synthetase family. In terms of assembly, homodimer.

It is found in the mitochondrion matrix. The catalysed reaction is tRNA(Tyr) + L-tyrosine + ATP = L-tyrosyl-tRNA(Tyr) + AMP + diphosphate + H(+). In terms of biological role, catalyzes the attachment of tyrosine to tRNA(Tyr) in a two-step reaction: tyrosine is first activated by ATP to form Tyr-AMP and then transferred to the acceptor end of tRNA(Tyr). This chain is Tyrosine--tRNA ligase, mitochondrial (YARS2), found in Homo sapiens (Human).